The chain runs to 349 residues: Magnesium-protoporphyrin IX monomethyl ester [oxidative] cyclase (349 aa).

Positions 1 to 10 (MTATTATAPT) are enriched in low complexity. The segment at 1 to 23 (MTATTATAPTMRGGGRNELPPHL) is disordered.

Belongs to the AcsF family. Fe cation serves as cofactor.

The enzyme catalyses Mg-protoporphyrin IX 13-monomethyl ester + 3 NADPH + 3 O2 + 2 H(+) = 3,8-divinyl protochlorophyllide a + 3 NADP(+) + 5 H2O. It functions in the pathway porphyrin-containing compound metabolism; chlorophyll biosynthesis (light-independent). In terms of biological role, catalyzes the formation of the isocyclic ring in chlorophyll biosynthesis. Mediates the cyclase reaction, which results in the formation of divinylprotochlorophyllide (Pchlide) characteristic of all chlorophylls from magnesium-protoporphyrin IX 13-monomethyl ester (MgPMME). The protein is Magnesium-protoporphyrin IX monomethyl ester [oxidative] cyclase of Prochlorococcus marinus (strain MIT 9313).